Here is a 252-residue protein sequence, read N- to C-terminus: Imidazole glycerol phosphate synthase subunit HisF (252 aa).

Active-site residues include Asp11 and Asp130.

This sequence belongs to the HisA/HisF family. Heterodimer of HisH and HisF.

It localises to the cytoplasm. The enzyme catalyses 5-[(5-phospho-1-deoxy-D-ribulos-1-ylimino)methylamino]-1-(5-phospho-beta-D-ribosyl)imidazole-4-carboxamide + L-glutamine = D-erythro-1-(imidazol-4-yl)glycerol 3-phosphate + 5-amino-1-(5-phospho-beta-D-ribosyl)imidazole-4-carboxamide + L-glutamate + H(+). The protein operates within amino-acid biosynthesis; L-histidine biosynthesis; L-histidine from 5-phospho-alpha-D-ribose 1-diphosphate: step 5/9. In terms of biological role, IGPS catalyzes the conversion of PRFAR and glutamine to IGP, AICAR and glutamate. The HisF subunit catalyzes the cyclization activity that produces IGP and AICAR from PRFAR using the ammonia provided by the HisH subunit. The chain is Imidazole glycerol phosphate synthase subunit HisF from Petrotoga mobilis (strain DSM 10674 / SJ95).